The sequence spans 216 residues: UPF0502 protein PFL_4004 (216 aa).

The protein belongs to the UPF0502 family.

The chain is UPF0502 protein PFL_4004 from Pseudomonas fluorescens (strain ATCC BAA-477 / NRRL B-23932 / Pf-5).